Reading from the N-terminus, the 547-residue chain is Probable bifunctional tRNA threonylcarbamoyladenosine biosynthesis protein (547 aa).

Residues 1-329 are kae1; the sequence is MKKTFILGIE…FRTDDVKVTW (329 aa). Residues His-113, His-117, and Tyr-134 each contribute to the Fe cation site. L-threonylcarbamoyladenylate is bound by residues 134 to 138, Asp-166, Gly-179, Glu-183, and Asn-262; that span reads YVSGA. Residue Asp-290 coordinates Fe cation. Residues 340-547 enclose the Protein kinase domain; that stretch reads EISPETFFRM…EEIKKRARYA (208 aa). ATP is bound by residues 355 to 363 and Lys-377; that span reads LDNGAEAVV. Asp-464 acts as the Proton acceptor; for kinase activity in catalysis.

In the N-terminal section; belongs to the KAE1 / TsaD family. This sequence in the C-terminal section; belongs to the protein kinase superfamily. Tyr protein kinase family. BUD32 subfamily. In terms of assembly, component of the KEOPS complex that consists of Kae1, Bud32, Cgi121 and Pcc1; the whole complex dimerizes. Fe(2+) is required as a cofactor.

The protein resides in the cytoplasm. It catalyses the reaction L-seryl-[protein] + ATP = O-phospho-L-seryl-[protein] + ADP + H(+). It carries out the reaction L-threonyl-[protein] + ATP = O-phospho-L-threonyl-[protein] + ADP + H(+). The catalysed reaction is L-threonylcarbamoyladenylate + adenosine(37) in tRNA = N(6)-L-threonylcarbamoyladenosine(37) in tRNA + AMP + H(+). Its function is as follows. Required for the formation of a threonylcarbamoyl group on adenosine at position 37 (t(6)A37) in tRNAs that read codons beginning with adenine. Is a component of the KEOPS complex that is probably involved in the transfer of the threonylcarbamoyl moiety of threonylcarbamoyl-AMP (TC-AMP) to the N6 group of A37. The Kae1 domain likely plays a direct catalytic role in this reaction. The Bud32 domain probably displays kinase activity that regulates Kae1 function. This chain is Probable bifunctional tRNA threonylcarbamoyladenosine biosynthesis protein, found in Methanosarcina mazei (strain ATCC BAA-159 / DSM 3647 / Goe1 / Go1 / JCM 11833 / OCM 88) (Methanosarcina frisia).